The primary structure comprises 127 residues: Small ribosomal subunit protein bS16 (127 aa).

Residues 80–127 are disordered; sequence GLKKRPTRNNPHKGEPGKKAQERIAAAKQAAEEAAAAKTESAPISEEV. A compositionally biased stretch (basic residues) spans 81–90; it reads LKKRPTRNNP. Residues 91–101 are compositionally biased toward basic and acidic residues; that stretch reads HKGEPGKKAQE. Positions 102-121 are enriched in low complexity; it reads RIAAAKQAAEEAAAAKTESA.

This sequence belongs to the bacterial ribosomal protein bS16 family.

This is Small ribosomal subunit protein bS16 from Bartonella henselae (strain ATCC 49882 / DSM 28221 / CCUG 30454 / Houston 1) (Rochalimaea henselae).